Here is a 612-residue protein sequence, read N- to C-terminus: UvrABC system protein C (612 aa).

The 79-residue stretch at 20-98 (THSGVYRMLD…IKQHRPKYNI (79 aa)) folds into the GIY-YIG domain. The UVR domain occupies 208–243 (SSVLEEISAKMYQASEDMEYEKAQVYRDQLVILRKL).

This sequence belongs to the UvrC family. As to quaternary structure, interacts with UvrB in an incision complex.

It is found in the cytoplasm. Its function is as follows. The UvrABC repair system catalyzes the recognition and processing of DNA lesions. UvrC both incises the 5' and 3' sides of the lesion. The N-terminal half is responsible for the 3' incision and the C-terminal half is responsible for the 5' incision. This chain is UvrABC system protein C, found in Francisella philomiragia subsp. philomiragia (strain ATCC 25017 / CCUG 19701 / FSC 153 / O#319-036).